Here is a 329-residue protein sequence, read N- to C-terminus: DNA-directed RNA polymerase subunit alpha (329 aa).

Residues 1 to 235 (MQGSVTEFLK…EQLEAFVDLR (235 aa)) are alpha N-terminal domain (alpha-NTD). The tract at residues 249–329 (FDPILLRPVD…NWPPASIADE (81 aa)) is alpha C-terminal domain (alpha-CTD).

It belongs to the RNA polymerase alpha chain family. In terms of assembly, homodimer. The RNAP catalytic core consists of 2 alpha, 1 beta, 1 beta' and 1 omega subunit. When a sigma factor is associated with the core the holoenzyme is formed, which can initiate transcription.

The catalysed reaction is RNA(n) + a ribonucleoside 5'-triphosphate = RNA(n+1) + diphosphate. Its function is as follows. DNA-dependent RNA polymerase catalyzes the transcription of DNA into RNA using the four ribonucleoside triphosphates as substrates. This is DNA-directed RNA polymerase subunit alpha from Cronobacter sakazakii (strain ATCC BAA-894) (Enterobacter sakazakii).